A 381-amino-acid polypeptide reads, in one-letter code: Prolargin (381 aa).

Positions 1-21 (MRSSLCWLLTLLLILATAAQG) are cleaved as a signal peptide. The segment at 19 to 65 (AQGQPTRRPRPRPRPRPRPRLRPTPSFPQPDEPTEPTDLPPPLPPGP) is disordered. The segment covering 25-39 (RRPRPRPRPRPRPRL) has biased composition (basic residues). Residues 56–65 (DLPPPLPPGP) are compositionally biased toward pro residues. LRR repeat units follow at residues 94–113 (RKVP…NNFI), 114–137 (TELP…NNRI), 138–161 (RKVD…KNQL), 162–182 (EEVP…QNQI), 183–206 (SRIP…HNKL), 207–232 (SDGV…HNTL), 233–253 (RKMP…SNRI), 254–277 (EAIP…YNQL), 278–302 (SDRG…HNRI), 303–322 (SSVP…NNSI), 323–361 (EKIN…GNYL), and 362–381 (KPPI…SVVI). Asparagine 123 carries an N-linked (GlcNAc...) asparagine glycan. Asparagine 288, asparagine 319, and asparagine 326 each carry an N-linked (GlcNAc...) asparagine glycan. Cysteine 331 and cysteine 372 form a disulfide bridge.

It belongs to the small leucine-rich proteoglycan (SLRP) family. SLRP class II subfamily. Binds the basement membrane heparan sulfate proteoglycan perlecan and triple helical collagens type I and type II. In terms of processing, glycosylated; contains heparan sulfate.

It is found in the secreted. Its subcellular location is the extracellular space. The protein resides in the extracellular matrix. In terms of biological role, may anchor basement membranes to the underlying connective tissue. The chain is Prolargin (PRELP) from Bos taurus (Bovine).